The sequence spans 290 residues: Acetyl-coenzyme A carboxylase carboxyl transferase subunit beta (290 aa).

The 263-residue stretch at 28-290 folds into the CoA carboxyltransferase N-terminal domain; that stretch reads LMNKCSKCGT…TVREGLSHGG (263 aa). Zn(2+) is bound by residues C32, C35, C51, and C54. Residues 32 to 54 form a C4-type zinc finger; the sequence is CSKCGTIQYSKELDKNLKVCSSC.

The protein belongs to the AccD/PCCB family. Acetyl-CoA carboxylase is a heterohexamer composed of biotin carboxyl carrier protein (AccB), biotin carboxylase (AccC) and two subunits each of ACCase subunit alpha (AccA) and ACCase subunit beta (AccD). It depends on Zn(2+) as a cofactor.

The protein localises to the cytoplasm. It carries out the reaction N(6)-carboxybiotinyl-L-lysyl-[protein] + acetyl-CoA = N(6)-biotinyl-L-lysyl-[protein] + malonyl-CoA. Its pathway is lipid metabolism; malonyl-CoA biosynthesis; malonyl-CoA from acetyl-CoA: step 1/1. In terms of biological role, component of the acetyl coenzyme A carboxylase (ACC) complex. Biotin carboxylase (BC) catalyzes the carboxylation of biotin on its carrier protein (BCCP) and then the CO(2) group is transferred by the transcarboxylase to acetyl-CoA to form malonyl-CoA. The polypeptide is Acetyl-coenzyme A carboxylase carboxyl transferase subunit beta (Paenibacillus sp. (strain JDR-2)).